The primary structure comprises 371 residues: MFPKWFDKWNADNPTNIFGPAILIGVLGVAVFGAAAIVSIGNPAQTASMQTGPRGTGMHVAEFNVTRFAPDPTIEEYYTEAPYIPEGGEELAKDIYENVQVLGDLTDDNFNRVMTAMTQWIAPEEGCVYCHGEGDLETYGEDNLYTKVVARRMIQMTQNINENWDGHVNANAEVGVNCYTCHRGEHVPSEIWFNITPVTEATAGWASVQNRATPLSQSTSLPSNALEIYLTEYEAVNVHDLESRVAGVPNDVEVASIQKTEMTFSLMNYFSNSLGVNCVFCHNSRAFYDPGQHTPQWATALLGRQMVIEMNQEYLIPLEDEYPEDRLGPVYADAPKAACKTCHKGYQKPMQGLNVIADWPELATTEAPVYE.

Heme contacts are provided by Met-114, Cys-127, Cys-130, His-131, Met-153, His-167, Cys-178, Cys-181, His-182, Met-267, Cys-278, Cys-281, His-282, Cys-339, Cys-342, and His-343.

In terms of assembly, component of the photosynthetic reaction center composed of protein subunits L (PufL), M (PufM), H (PuhA) and cytochrome C (PufC). The reaction center interacts with light-harvesting antenna complex LH1. In terms of processing, binds 4 heme groups per subunit.

It localises to the cellular chromatophore membrane. Its function is as follows. The reaction center of purple bacteria contains a tightly bound cytochrome molecule which re-reduces the photo oxidized primary electron donor. This is Photosynthetic reaction center cytochrome c subunit (pufC) from Roseobacter denitrificans (strain ATCC 33942 / OCh 114) (Erythrobacter sp. (strain OCh 114)).